The following is a 72-amino-acid chain: Large ribosomal subunit protein bL31 (72 aa).

Cys-16, Cys-18, Cys-38, and Cys-41 together coordinate Zn(2+).

This sequence belongs to the bacterial ribosomal protein bL31 family. Type A subfamily. In terms of assembly, part of the 50S ribosomal subunit. Zn(2+) serves as cofactor.

Functionally, binds the 23S rRNA. The chain is Large ribosomal subunit protein bL31 from Aliivibrio salmonicida (strain LFI1238) (Vibrio salmonicida (strain LFI1238)).